A 273-amino-acid chain; its full sequence is Putative pyruvate, phosphate dikinase regulatory protein (273 aa).

149–156 (GPSRTSKT) lines the ADP pocket.

Belongs to the pyruvate, phosphate/water dikinase regulatory protein family. PDRP subfamily.

It carries out the reaction N(tele)-phospho-L-histidyl/L-threonyl-[pyruvate, phosphate dikinase] + ADP = N(tele)-phospho-L-histidyl/O-phospho-L-threonyl-[pyruvate, phosphate dikinase] + AMP + H(+). It catalyses the reaction N(tele)-phospho-L-histidyl/O-phospho-L-threonyl-[pyruvate, phosphate dikinase] + phosphate + H(+) = N(tele)-phospho-L-histidyl/L-threonyl-[pyruvate, phosphate dikinase] + diphosphate. Functionally, bifunctional serine/threonine kinase and phosphorylase involved in the regulation of the pyruvate, phosphate dikinase (PPDK) by catalyzing its phosphorylation/dephosphorylation. This is Putative pyruvate, phosphate dikinase regulatory protein from Rickettsia massiliae (strain Mtu5).